We begin with the raw amino-acid sequence, 556 residues long: Arginine--tRNA ligase (556 aa).

Positions 132-142 match the 'HIGH' region motif; the sequence is ANPTGDLHLGH.

The protein belongs to the class-I aminoacyl-tRNA synthetase family. In terms of assembly, monomer.

It is found in the cytoplasm. The catalysed reaction is tRNA(Arg) + L-arginine + ATP = L-arginyl-tRNA(Arg) + AMP + diphosphate. This Bacillus velezensis (strain DSM 23117 / BGSC 10A6 / LMG 26770 / FZB42) (Bacillus amyloliquefaciens subsp. plantarum) protein is Arginine--tRNA ligase.